The following is a 330-amino-acid chain: Type II restriction enzyme Cfr9I (330 aa).

The protein belongs to the XcyI type II restriction endonuclease family. Mg(2+) is required as a cofactor.

It carries out the reaction Endonucleolytic cleavage of DNA to give specific double-stranded fragments with terminal 5'-phosphates.. An E and P subtype restriction enzyme that recognizes the double-stranded sequence 5'-CCCGGG-3' and cleaves after C-1. The sequence is that of Type II restriction enzyme Cfr9I (cfr9IR) from Citrobacter freundii.